Consider the following 144-residue polypeptide: 3-dehydroquinate dehydratase (144 aa).

The active-site Proton acceptor is Tyr-22. 3 residues coordinate substrate: Asn-71, His-77, and Asp-84. His-97 acts as the Proton donor in catalysis. Substrate-binding positions include 98 to 99 (IS) and Arg-108.

It belongs to the type-II 3-dehydroquinase family. Homododecamer.

It carries out the reaction 3-dehydroquinate = 3-dehydroshikimate + H2O. It participates in metabolic intermediate biosynthesis; chorismate biosynthesis; chorismate from D-erythrose 4-phosphate and phosphoenolpyruvate: step 3/7. In terms of biological role, catalyzes a trans-dehydration via an enolate intermediate. In Thermotoga petrophila (strain ATCC BAA-488 / DSM 13995 / JCM 10881 / RKU-1), this protein is 3-dehydroquinate dehydratase.